Consider the following 102-residue polypeptide: Virulence plasmid protein pGP4-D (102 aa).

This chain is Virulence plasmid protein pGP4-D, found in Chlamydia trachomatis serovar L2 (strain ATCC VR-902B / DSM 19102 / 434/Bu).